We begin with the raw amino-acid sequence, 332 residues long: Fructose-1,6-bisphosphatase class 1 (332 aa).

Glutamate 94, aspartate 116, leucine 118, and aspartate 119 together coordinate Mg(2+). Residues 119 to 122 (DGSS), asparagine 211, tyrosine 239, 257 to 259 (YLY), and lysine 269 each bind substrate. Residue glutamate 275 participates in Mg(2+) binding.

The protein belongs to the FBPase class 1 family. As to quaternary structure, homotetramer. Mg(2+) is required as a cofactor.

The protein localises to the cytoplasm. The enzyme catalyses beta-D-fructose 1,6-bisphosphate + H2O = beta-D-fructose 6-phosphate + phosphate. It functions in the pathway carbohydrate biosynthesis; Calvin cycle. This is Fructose-1,6-bisphosphatase class 1 from Synechococcus sp. (strain JA-3-3Ab) (Cyanobacteria bacterium Yellowstone A-Prime).